The sequence spans 394 residues: uncharacterized protein (394 aa).

2 consecutive transmembrane segments (helical) span residues 31–51 (LAIL…LSGL) and 57–77 (LIIA…SLLI).

It belongs to the chlamydial CPn_0129/CT_036/TC_0306 family.

The protein resides in the cell membrane. This is an uncharacterized protein from Chlamydia pneumoniae (Chlamydophila pneumoniae).